We begin with the raw amino-acid sequence, 462 residues long: Protein Tube (462 aa).

The 126-residue stretch at 27 to 152 (YSRNTELRRV…SAADFVALDF (126 aa)) folds into the Death domain. The interval 218–265 (RDKSVPQPSGNTPPIAPPRRQQRSTTNSNFATLTGTGTTSTTIPNVPN) is disordered. Over residues 249-259 (TLTGTGTTSTT) the composition is skewed to low complexity. Tandem repeats lie at residues 262 to 269 (NVPNLTIL) and 286 to 293 (NIPDLSIL). A 5 X approximate repeats region spans residues 262-460 (NVPNLTILNP…ACNIPDLSEL (199 aa)). Polar residues predominate over residues 301–317 (RATVSDNPSNRTSSTDP). Positions 301 to 462 (RATVSDNPSN…NIPDLSELQQ (162 aa)) are disordered. Residues 319–326 (NIPRITLL) form repeat 3. Low complexity predominate over residues 342–354 (AKASTATTSTASS). Polar residues predominate over residues 355–367 (NNLPMISALNISK). Repeat unit 4 spans residues 356–363 (NLPMISAL). Over residues 368–377 (GSRETLRPES) the composition is skewed to basic and acidic residues. Acidic residues predominate over residues 387-403 (DDDDDNDGEEDGEEEYP). Over residues 409–424 (NLSNSEQQSSNNDSSL) the composition is skewed to low complexity. The segment covering 425 to 438 (TTVTGTSGDNSFEL) has biased composition (polar residues). The span at 439 to 449 (TNDSSSTSNDD) shows a compositional bias: low complexity. Repeat unit 5 spans residues 453 to 460 (NIPDLSEL).

As to quaternary structure, interacts (via Death domain) with pll (via Death domain). In terms of processing, phosphorylated by pll.

It is found in the cytoplasm. The protein resides in the cell membrane. Functionally, plays an essential role in the Tl receptor signaling pathway that establishes embryonic dorsoventral polarity; the signal directs import of dl into ventral and ventrolateral nuclei, thereby establishing dorsoventral polarity. Tub recruits pll to the plasma membrane and protein-protein interaction activates pll. Also has a role in pupal pattern formation. The sequence is that of Protein Tube (tub) from Drosophila melanogaster (Fruit fly).